The sequence spans 66 residues: Large ribosomal subunit protein uL29 (66 aa).

It belongs to the universal ribosomal protein uL29 family.

The polypeptide is Large ribosomal subunit protein uL29 (Rhizobium leguminosarum bv. trifolii (strain WSM2304)).